The following is a 310-amino-acid chain: Acetyl-coenzyme A carboxylase carboxyl transferase subunit beta (310 aa).

The CoA carboxyltransferase N-terminal domain maps to 27–296; sequence LWKKCPKCSA…PEFENEEELE (270 aa). Residues Cys-31, Cys-34, Cys-50, and Cys-53 each coordinate Zn(2+). A C4-type zinc finger spans residues 31–53; it reads CPKCSAVLYRPELEKNLDVCPKC. The interval 285-310 is disordered; sequence PEPEFENEEELEEEEMERPEPPDNVE. The span at 287–310 shows a compositional bias: acidic residues; the sequence is PEFENEEELEEEEMERPEPPDNVE.

It belongs to the AccD/PCCB family. As to quaternary structure, acetyl-CoA carboxylase is a heterohexamer composed of biotin carboxyl carrier protein (AccB), biotin carboxylase (AccC) and two subunits each of ACCase subunit alpha (AccA) and ACCase subunit beta (AccD). The cofactor is Zn(2+).

Its subcellular location is the cytoplasm. It catalyses the reaction N(6)-carboxybiotinyl-L-lysyl-[protein] + acetyl-CoA = N(6)-biotinyl-L-lysyl-[protein] + malonyl-CoA. It participates in lipid metabolism; malonyl-CoA biosynthesis; malonyl-CoA from acetyl-CoA: step 1/1. In terms of biological role, component of the acetyl coenzyme A carboxylase (ACC) complex. Biotin carboxylase (BC) catalyzes the carboxylation of biotin on its carrier protein (BCCP) and then the CO(2) group is transferred by the transcarboxylase to acetyl-CoA to form malonyl-CoA. The chain is Acetyl-coenzyme A carboxylase carboxyl transferase subunit beta from Hahella chejuensis (strain KCTC 2396).